The chain runs to 149 residues: Gamma-glutamylaminecyclotransferase (149 aa).

Residue 7-10 coordinates substrate; the sequence is YGTL. Glu-82 serves as the catalytic Proton acceptor.

The protein belongs to the gamma-glutamylcyclotransferase family. As to quaternary structure, monomer.

It catalyses the reaction epsilon-(gamma-L-glutamyl)-L-lysine = 5-oxo-L-proline + L-lysine. Contributes to degradation of proteins cross-linked by transglutaminases by degrading the cross-link between a lysine and a glutamic acid residue. Catalyzes the formation of 5-oxo-L-proline from L-gamma-glutamyl-L-epsilon-lysine. Inactive with L-gamma-glutamyl-alpha-amino acid substrates such as L-gamma-glutamyl-L-alpha-cysteine and L-gamma-glutamyl-L-alpha-alanine. The chain is Gamma-glutamylaminecyclotransferase (Ggact) from Rattus norvegicus (Rat).